The sequence spans 351 residues: Uroporphyrinogen decarboxylase (351 aa).

Substrate is bound by residues 25–29 (RQAGR), D74, Y151, S206, and H325.

Belongs to the uroporphyrinogen decarboxylase family. Homodimer.

The protein localises to the cytoplasm. It catalyses the reaction uroporphyrinogen III + 4 H(+) = coproporphyrinogen III + 4 CO2. The protein operates within porphyrin-containing compound metabolism; protoporphyrin-IX biosynthesis; coproporphyrinogen-III from 5-aminolevulinate: step 4/4. Functionally, catalyzes the decarboxylation of four acetate groups of uroporphyrinogen-III to yield coproporphyrinogen-III. This chain is Uroporphyrinogen decarboxylase, found in Chlorobium chlorochromatii (strain CaD3).